Reading from the N-terminus, the 324-residue chain is MTINLGIIMDPISSINIKKDSSFAILLEAQNRKYKIYYMELKDLYLKDNKPYSHTKLLRIKNNKKQWFTLEQQKDVSLSNLDVILMRKNPPINRAYIYATYILEQAERNGSYIINKPSSLRSYNEKLFTTTHFPQYIPKTLITSNSTKIHNFIKTYKDIIIKPLHGMAGLSIFRIKEHDPNTSVIIETMTKYETIPCISQNYITDIQKGDKRILIINGIPFPWCLARIPKKHENRGNLSIGGYGNTQKLSKNDWEIALSIAPTLNKKGIFFAGIDIIGTKLTEINITSPTCIQEIEQDTGISISTIILDNLEKNLKKRKTNRYL.

An ATP-grasp domain is found at Glu125–Glu312. Phe152 to Gly209 provides a ligand contact to ATP. Residues Glu283 and Asn285 each contribute to the Mg(2+) site.

Belongs to the prokaryotic GSH synthase family. Mg(2+) is required as a cofactor. Requires Mn(2+) as cofactor.

It catalyses the reaction gamma-L-glutamyl-L-cysteine + glycine + ATP = glutathione + ADP + phosphate + H(+). It participates in sulfur metabolism; glutathione biosynthesis; glutathione from L-cysteine and L-glutamate: step 2/2. This Buchnera aphidicola subsp. Baizongia pistaciae (strain Bp) protein is Glutathione synthetase.